The following is an 887-amino-acid chain: 3-hydroxy-3-methylglutaryl-coenzyme A reductase (887 aa).

At 1 to 9 the chain is on the cytoplasmic side; the sequence is MLSRLFRMH. A helical transmembrane segment spans residues 10–39; that stretch reads GLFVASHPWEVIVGTVTLTICMMSMNMFTG. The Lumenal portion of the chain corresponds to 40 to 56; sequence NNKICGWNYECPKFEED. Residues 57–78 traverse the membrane as a helical segment; sequence VLSSDIIILTITRCIAILYIYF. The region spanning 61-218 is the SSD domain; the sequence is DIIILTITRC…MTFFPACVSL (158 aa). An INSIG-binding motif motif is present at residues 75 to 78; sequence YIYF. At 79–89 the chain is on the cytoplasmic side; the sequence is QFQNLRQLGSK. A Glycyl lysine isopeptide (Lys-Gly) (interchain with G-Cter in ubiquitin) cross-link involves residue Lys-89. A helical membrane pass occupies residues 90–114; the sequence is YILGIAGLFTIFSSFVFSTVVIHFL. At 115 to 123 the chain is on the lumenal side; it reads DKELTGLNE. Residues 124–149 form a helical membrane-spanning segment; the sequence is ALPFFLLLIDLSRASALAKFALSSNS. Over 150–159 the chain is Cytoplasmic; sequence QDEVRENIAR. A helical transmembrane segment spans residues 160 to 187; it reads GMAILGPTFTLDALVECLVIGVGTMSGV. Residues 188–191 lie on the Lumenal side of the membrane; that stretch reads RQLE. Residues 192-220 traverse the membrane as a helical segment; it reads IMCCFGCMSVLANYFVFMTFFPACVSLVL. Residues 221 to 248 lie on the Cytoplasmic side of the membrane; the sequence is ELSRESREGRPIWQLSHFARVLEEEENK. Lys-248 participates in a covalent cross-link: Glycyl lysine isopeptide (Lys-Gly) (interchain with G-Cter in ubiquitin). The chain crosses the membrane as a helical span at residues 249–275; that stretch reads PNPVTQRVKMIMSLGLVLVHAHSRWIA. The Lumenal portion of the chain corresponds to 276-314; that stretch reads DPSPQNSTTEHSKVSLGLDEDVSKRIEPSVSLWQFYLSK. The N-linked (GlcNAc...) asparagine glycan is linked to Asn-281. A helical membrane pass occupies residues 315–339; sequence MISMDIEQVVTLSLAFLLAVKYIFF. Over 340–887 the chain is Cytoplasmic; it reads EQAETESTLS…LQGTCTKKSA (548 aa). Active-site charge relay system residues include Glu-558, Lys-690, and Asp-766. The Proton donor role is filled by His-865. Ser-871 is modified (phosphoserine; by AMPK).

The protein belongs to the HMG-CoA reductase family. In terms of assembly, homotetramer. Homodimer. Interacts (via its SSD) with INSIG1; the interaction, accelerated by sterols, leads to the recruitment of HMGCR to AMFR/gp78 for its ubiquitination by the sterol-mediated ERAD pathway. Interacts with UBIAD1. N-glycosylated. Glycosylated with high mannose chains including Man(6)(GlcNAc)(2), Man(7)(GlcNAc)(2) and Man(8)(GlcNAc)(2). Deglycosylated by NGLY1 on release from the endoplasmic reticulum (ER) in a sterol-mediated manner. In terms of processing, undergoes sterol-mediated ubiquitination and ER-associated degradation (ERAD). Accumulation of sterols in the endoplasmic reticulum (ER) membrane, triggers binding of the reductase to the ER membrane protein INSIG1 or INSIG2. The INSIG1 binding leads to the recruitment of the ubiquitin ligase, AMFR/gp78, RNF139 or RNF145, initiating ubiquitination of the reductase. The ubiquitinated reductase is then extracted from the ER membrane and delivered to cytosolic 26S proteosomes by a mechanism probably mediated by the ATPase Valosin-containing protein VCP/p97. The INSIG2-binding leads to the recruitment of the ubiquitin ligase RNF139, initiating ubiquitination of the reductase. Lys-248 is the main site of ubiquitination. Ubiquitination is enhanced by the presence of a geranylgeranylated protein. Post-translationally, phosphorylated. Phosphorylation at Ser-871 reduces the catalytic activity.

It localises to the endoplasmic reticulum membrane. It is found in the peroxisome membrane. It catalyses the reaction (R)-mevalonate + 2 NADP(+) + CoA = (3S)-3-hydroxy-3-methylglutaryl-CoA + 2 NADPH + 2 H(+). It functions in the pathway metabolic intermediate biosynthesis; (R)-mevalonate biosynthesis; (R)-mevalonate from acetyl-CoA: step 3/3. With respect to regulation, regulated by a negative feedback mechanism through sterols and non-sterol metabolites derived from mevalonate. Phosphorylation at Ser-871 down-regulates the catalytic activity. In terms of biological role, catalyzes the conversion of (3S)-hydroxy-3-methylglutaryl-CoA (HMG-CoA) to mevalonic acid, the rate-limiting step in the synthesis of cholesterol and other isoprenoids, thus plays a critical role in cellular cholesterol homeostasis. This is 3-hydroxy-3-methylglutaryl-coenzyme A reductase (HMGCR) from Cricetulus griseus (Chinese hamster).